The sequence spans 517 residues: ATP synthase subunit alpha (517 aa).

An ATP-binding site is contributed by 175-182 (GDRQTGKT).

The protein belongs to the ATPase alpha/beta chains family. F-type ATPases have 2 components, CF(1) - the catalytic core - and CF(0) - the membrane proton channel. CF(1) has five subunits: alpha(3), beta(3), gamma(1), delta(1), epsilon(1). CF(0) has three main subunits: a(1), b(2) and c(9-12). The alpha and beta chains form an alternating ring which encloses part of the gamma chain. CF(1) is attached to CF(0) by a central stalk formed by the gamma and epsilon chains, while a peripheral stalk is formed by the delta and b chains.

It is found in the cell membrane. It carries out the reaction ATP + H2O + 4 H(+)(in) = ADP + phosphate + 5 H(+)(out). In terms of biological role, produces ATP from ADP in the presence of a proton gradient across the membrane. The alpha chain is a regulatory subunit. This is ATP synthase subunit alpha from Herpetosiphon aurantiacus (strain ATCC 23779 / DSM 785 / 114-95).